The primary structure comprises 598 residues: Peroxisomal multifunctional enzyme type 2 (598 aa).

The (3R)-hydroxyacyl-CoA dehydrogenase stretch occupies residues 1-309; that stretch reads MSSSDGKLRY…LEVLEKLKEG (309 aa). NAD(+) is bound by residues 16–40, Leu24, Asp43, 78–79, and Asn102; these read VVTG…AKVV and SV. Ser154 contributes to the substrate binding site. The active-site Proton acceptor is Tyr167. NAD(+) is bound by residues 167-171 and 199-202; these read YTAAK and AASR. The segment at 310-598 is enoyl-CoA hydratase 2; that stretch reads GGDAIEDAFE…VDLKSSQAKL (289 aa). (3R)-3-hydroxydecanoyl-CoA-binding positions include 390-391, Lys419, 496-501, Gly519, and Phe549; these read HG and DKNPLH. Residues 469–586 form the MaoC-like domain; it reads PAPNRQPDAT…VETGKEVISG (118 aa). Positions 596-598 match the Microbody targeting signal motif; that stretch reads AKL.

This sequence belongs to the short-chain dehydrogenases/reductases (SDR) family. In terms of assembly, homodimer.

It is found in the peroxisome. The enzyme catalyses a (3R)-3-hydroxyacyl-CoA + NAD(+) = a 3-oxoacyl-CoA + NADH + H(+). It carries out the reaction a (3R)-3-hydroxyacyl-CoA = a (2E)-enoyl-CoA + H2O. The protein operates within lipid metabolism; fatty acid beta-oxidation. Its function is as follows. Bifunctional enzyme acting on the peroxisomal beta-oxidation pathway for fatty acids. The polypeptide is Peroxisomal multifunctional enzyme type 2 (Drosophila melanogaster (Fruit fly)).